The sequence spans 296 residues: Porphobilinogen deaminase (296 aa).

Cys-232 is subject to S-(dipyrrolylmethanemethyl)cysteine.

It belongs to the HMBS family. In terms of assembly, monomer. It depends on dipyrromethane as a cofactor.

It carries out the reaction 4 porphobilinogen + H2O = hydroxymethylbilane + 4 NH4(+). It participates in porphyrin-containing compound metabolism; protoporphyrin-IX biosynthesis; coproporphyrinogen-III from 5-aminolevulinate: step 2/4. Its function is as follows. Tetrapolymerization of the monopyrrole PBG into the hydroxymethylbilane pre-uroporphyrinogen in several discrete steps. This Corynebacterium aurimucosum (strain ATCC 700975 / DSM 44827 / CIP 107346 / CN-1) (Corynebacterium nigricans) protein is Porphobilinogen deaminase.